The primary structure comprises 559 residues: Urocanate hydratase (559 aa).

Residues 53–54 (GG), Q131, 177–179 (GMG), E197, R202, 243–244 (NA), 264–268 (QTSAH), 274–275 (YL), and Y323 each bind NAD(+). C411 is a catalytic residue. G493 contributes to the NAD(+) binding site.

This sequence belongs to the urocanase family. It depends on NAD(+) as a cofactor.

It is found in the cytoplasm. It catalyses the reaction 4-imidazolone-5-propanoate = trans-urocanate + H2O. It functions in the pathway amino-acid degradation; L-histidine degradation into L-glutamate; N-formimidoyl-L-glutamate from L-histidine: step 2/3. In terms of biological role, catalyzes the conversion of urocanate to 4-imidazolone-5-propionate. This chain is Urocanate hydratase, found in Pseudomonas aeruginosa (strain LESB58).